A 235-amino-acid polypeptide reads, in one-letter code: Phosphoribosylaminoimidazole-succinocarboxamide synthase (235 aa).

It belongs to the SAICAR synthetase family.

It carries out the reaction 5-amino-1-(5-phospho-D-ribosyl)imidazole-4-carboxylate + L-aspartate + ATP = (2S)-2-[5-amino-1-(5-phospho-beta-D-ribosyl)imidazole-4-carboxamido]succinate + ADP + phosphate + 2 H(+). The protein operates within purine metabolism; IMP biosynthesis via de novo pathway; 5-amino-1-(5-phospho-D-ribosyl)imidazole-4-carboxamide from 5-amino-1-(5-phospho-D-ribosyl)imidazole-4-carboxylate: step 1/2. This chain is Phosphoribosylaminoimidazole-succinocarboxamide synthase, found in Streptococcus pneumoniae (strain 70585).